Consider the following 275-residue polypeptide: NH(3)-dependent NAD(+) synthetase (275 aa).

ATP is bound at residue 46 to 53; that stretch reads GISGGQDS. Residue aspartate 52 participates in Mg(2+) binding. Position 140 (arginine 140) interacts with deamido-NAD(+). Residue threonine 160 coordinates ATP. Glutamate 165 is a Mg(2+) binding site. Positions 173 and 180 each coordinate deamido-NAD(+). Residues lysine 189 and threonine 211 each coordinate ATP. 260–261 contributes to the deamido-NAD(+) binding site; it reads HK.

This sequence belongs to the NAD synthetase family. Homodimer.

It carries out the reaction deamido-NAD(+) + NH4(+) + ATP = AMP + diphosphate + NAD(+) + H(+). Its pathway is cofactor biosynthesis; NAD(+) biosynthesis; NAD(+) from deamido-NAD(+) (ammonia route): step 1/1. Its function is as follows. Catalyzes the ATP-dependent amidation of deamido-NAD to form NAD. Uses ammonia as a nitrogen source. In Salmonella typhi, this protein is NH(3)-dependent NAD(+) synthetase.